Consider the following 417-residue polypeptide: Serine hydroxymethyltransferase 4 (417 aa).

Residues leucine 121 and 125–127 (GHL) contribute to the (6S)-5,6,7,8-tetrahydrofolate site. An N6-(pyridoxal phosphate)lysine modification is found at lysine 230. 355–357 (SPF) lines the (6S)-5,6,7,8-tetrahydrofolate pocket.

Belongs to the SHMT family. In terms of assembly, homodimer. It depends on pyridoxal 5'-phosphate as a cofactor.

It is found in the cytoplasm. The catalysed reaction is (6R)-5,10-methylene-5,6,7,8-tetrahydrofolate + glycine + H2O = (6S)-5,6,7,8-tetrahydrofolate + L-serine. The protein operates within one-carbon metabolism; tetrahydrofolate interconversion. Its pathway is amino-acid biosynthesis; glycine biosynthesis; glycine from L-serine: step 1/1. Its function is as follows. Catalyzes the reversible interconversion of serine and glycine with tetrahydrofolate (THF) serving as the one-carbon carrier. This reaction serves as the major source of one-carbon groups required for the biosynthesis of purines, thymidylate, methionine, and other important biomolecules. Also exhibits THF-independent aldolase activity toward beta-hydroxyamino acids, producing glycine and aldehydes, via a retro-aldol mechanism. The sequence is that of Serine hydroxymethyltransferase 4 from Colwellia psychrerythraea (strain 34H / ATCC BAA-681) (Vibrio psychroerythus).